A 491-amino-acid chain; its full sequence is Glutamyl-tRNA(Gln) amidotransferase subunit A (491 aa).

Residues K76 and S154 each act as charge relay system in the active site. Catalysis depends on S178, which acts as the Acyl-ester intermediate.

Belongs to the amidase family. GatA subfamily. As to quaternary structure, heterotrimer of A, B and C subunits.

It carries out the reaction L-glutamyl-tRNA(Gln) + L-glutamine + ATP + H2O = L-glutaminyl-tRNA(Gln) + L-glutamate + ADP + phosphate + H(+). Allows the formation of correctly charged Gln-tRNA(Gln) through the transamidation of misacylated Glu-tRNA(Gln) in organisms which lack glutaminyl-tRNA synthetase. The reaction takes place in the presence of glutamine and ATP through an activated gamma-phospho-Glu-tRNA(Gln). The protein is Glutamyl-tRNA(Gln) amidotransferase subunit A of Cereibacter sphaeroides (strain ATCC 17023 / DSM 158 / JCM 6121 / CCUG 31486 / LMG 2827 / NBRC 12203 / NCIMB 8253 / ATH 2.4.1.) (Rhodobacter sphaeroides).